We begin with the raw amino-acid sequence, 85 residues long: UPF0291 protein SAK_0343 (85 aa).

A disordered region spans residues 58 to 85 (GNDVTPEKLRQVQREKGLHGRSLDDPNS). Residues 62-85 (TPEKLRQVQREKGLHGRSLDDPNS) are compositionally biased toward basic and acidic residues.

It belongs to the UPF0291 family.

The protein localises to the cytoplasm. This is UPF0291 protein SAK_0343 from Streptococcus agalactiae serotype Ia (strain ATCC 27591 / A909 / CDC SS700).